The chain runs to 552 residues: Membrane protein insertase YidC (552 aa).

Residues 3-23 (IKRTVLWVIFFMSAVMLFDNW) form a helical membrane-spanning segment. The interval 35–59 (PSATPTKTVGSAAPGTTTPGTQPAD) is disordered. The span at 42–59 (TVGSAAPGTTTPGTQPAD) shows a compositional bias: low complexity. The next 3 membrane-spanning stretches (helical) occupy residues 364–384 (WGWS…PLSA), 430–450 (FGGC…YWVL), and 504–524 (MMFM…GLVL).

It belongs to the OXA1/ALB3/YidC family. Type 1 subfamily. As to quaternary structure, interacts with the Sec translocase complex via SecD. Specifically interacts with transmembrane segments of nascent integral membrane proteins during membrane integration.

Its subcellular location is the cell inner membrane. Functionally, required for the insertion and/or proper folding and/or complex formation of integral membrane proteins into the membrane. Involved in integration of membrane proteins that insert both dependently and independently of the Sec translocase complex, as well as at least some lipoproteins. Aids folding of multispanning membrane proteins. The chain is Membrane protein insertase YidC from Paraburkholderia phytofirmans (strain DSM 17436 / LMG 22146 / PsJN) (Burkholderia phytofirmans).